Reading from the N-terminus, the 421-residue chain is Battenin (421 aa).

5 consecutive transmembrane segments (helical) span residues 13–35, 47–67, 74–96, 101–123, and 137–157; these read SFHFMGNINNFSYCVVNAASGNL, IILWANIAFGLVSRLVNTFLI, LKIVVNCLFMSIGLIGVALSVYV, CIAAIAFVGIASSFGESVILSYM, and GTGIAGVCGSLFYIAMVAAGL. Asn159 is a glycosylation site (N-linked (GlcNAc...) asparagine). The chain crosses the membrane as a helical span at residues 161 to 181; sequence TIFYMMLPTVAVYFLLFFFGL. The tract at residues 190–211 is disordered; it reads DRTDNHNNSNNSSNNSKYTEKQ. A compositionally biased stretch (low complexity) spans 195–205; it reads HNNSNNSSNNS. Asn196, Asn199, Asn200, and Asn203 each carry an N-linked (GlcNAc...) asparagine glycan. Helical transmembrane passes span 248–268, 284–304, 313–333, 338–358, and 382–402; these read LVWFNAVNLALVYFFEYVASV, FFIANAFAIFSFCYQLGVLIS, IKHIGVITILQGINMVFWIIQ, MVTSVWVLFILMVYCGLLGGA, and INYAALLVTVGITLAACFILV.

This sequence belongs to the battenin family.

The protein resides in the lysosome membrane. This is Battenin (cln3) from Dictyostelium discoideum (Social amoeba).